The chain runs to 233 residues: uncharacterized protein (233 aa).

The segment at 190–233 is disordered; the sequence is LNTSLSEDDTESIVETDYSEEEKESISETESSSDDESYSLYDSF. Over residues 195–212 the composition is skewed to acidic residues; that stretch reads SEDDTESIVETDYSEEEK.

The protein belongs to the asfivirus DP238L family.

This is an uncharacterized protein from Ornithodoros (relapsing fever ticks).